The primary structure comprises 80 residues: Gamma-conotoxin PnVIIA (80 aa).

The N-terminal stretch at 1–19 (MEKLTILLLVAAVLMSTQA) is a signal peptide. Positions 20-43 (QNQEQRQQAKINFLSKRKPSAERW) are excised as a propeptide. Disulfide bonds link Cys-47/Cys-61, Cys-54/Cys-65, and Cys-60/Cys-70. The residue at position 59 (Glu-59) is a 4-carboxyglutamate. Glu-71 bears the 4-carboxyglutamate mark. 4-hydroxyproline is present on Pro-76. Residues 78 to 80 (FGA) constitute a propeptide that is removed on maturation.

As to expression, expressed by the venom duct.

It is found in the secreted. Its function is as follows. Gamma-conotoxins may act on voltage-gated non-specific cation pacemaker channels (HCN). Triggers depolarization and firing of action potential bursts in the caudodorsal neurons of lymnaea. This effect is due to activation or enhancement of a slow inward cation current that may underlie endogenous bursting activity of these neurons. The polypeptide is Gamma-conotoxin PnVIIA (Conus pennaceus (Feathered cone)).